We begin with the raw amino-acid sequence, 580 residues long: Arginine--tRNA ligase (580 aa).

The 'HIGH' region motif lies at 131 to 141 (ANPTGPMHVGH).

Belongs to the class-I aminoacyl-tRNA synthetase family. As to quaternary structure, monomer.

Its subcellular location is the cytoplasm. It catalyses the reaction tRNA(Arg) + L-arginine + ATP = L-arginyl-tRNA(Arg) + AMP + diphosphate. This is Arginine--tRNA ligase from Cereibacter sphaeroides (strain ATCC 17025 / ATH 2.4.3) (Rhodobacter sphaeroides).